We begin with the raw amino-acid sequence, 65 residues long: Gallinacin-1 (65 aa).

The signal sequence occupies residues 1–19 (MRIVYLLLPFILLLAQGAA). The propeptide occupies 20-25 (GSSQAL). 3 disulfides stabilise this stretch: Cys31–Cys59, Cys38–Cys53, and Cys43–Cys60.

Belongs to the beta-defensin family. Strong expression in the bone marrow, lung, testis. Moderate expression in the bursa and intestine. Low expression in the cloaca, gall bladder, brain and pancreas. Expressed in the vagina, ovarian stroma and the theca and granulosa layers of the ovarian follicle.

Its subcellular location is the secreted. The protein localises to the cytoplasmic granule. In terms of biological role, has bactericidal activity. Potent activity against E.coli ML-35, L.monocytogenes EGD and C.albicans. In Gallus gallus (Chicken), this protein is Gallinacin-1 (GAL1).